Reading from the N-terminus, the 520-residue chain is 2-isopropylmalate synthase (520 aa).

In terms of domain architecture, Pyruvate carboxyltransferase spans isoleucine 12–valine 274. Mn(2+) is bound by residues aspartate 21, histidine 209, histidine 211, and asparagine 245. The interval arginine 396–alanine 520 is regulatory domain.

The protein belongs to the alpha-IPM synthase/homocitrate synthase family. LeuA type 1 subfamily. Homodimer. The cofactor is Mn(2+).

It is found in the cytoplasm. The catalysed reaction is 3-methyl-2-oxobutanoate + acetyl-CoA + H2O = (2S)-2-isopropylmalate + CoA + H(+). It functions in the pathway amino-acid biosynthesis; L-leucine biosynthesis; L-leucine from 3-methyl-2-oxobutanoate: step 1/4. Catalyzes the condensation of the acetyl group of acetyl-CoA with 3-methyl-2-oxobutanoate (2-ketoisovalerate) to form 3-carboxy-3-hydroxy-4-methylpentanoate (2-isopropylmalate). This is 2-isopropylmalate synthase from Xanthomonas oryzae pv. oryzae (strain KACC10331 / KXO85).